The primary structure comprises 152 residues: Stigma-specific STIG1-like protein 1 (152 aa).

Positions 1 to 19 (MAFVKLLVSIAITTAITIA) are cleaved as a signal peptide.

It belongs to the STIG1 family.

This is Stigma-specific STIG1-like protein 1 from Arabidopsis thaliana (Mouse-ear cress).